The primary structure comprises 462 residues: Probable Xaa-Pro aminopeptidase NECHADRAFT_60613 (462 aa).

Mn(2+)-binding residues include Asp259, Asp270, Glu393, and Glu433.

It belongs to the peptidase M24B family. Requires Mn(2+) as cofactor.

The catalysed reaction is Release of any N-terminal amino acid, including proline, that is linked to proline, even from a dipeptide or tripeptide.. Its function is as follows. Catalyzes the removal of a penultimate prolyl residue from the N-termini of peptides. This Fusarium vanettenii (strain ATCC MYA-4622 / CBS 123669 / FGSC 9596 / NRRL 45880 / 77-13-4) (Fusarium solani subsp. pisi) protein is Probable Xaa-Pro aminopeptidase NECHADRAFT_60613.